We begin with the raw amino-acid sequence, 358 residues long: UDP-N-acetylglucosamine--N-acetylmuramyl-(pentapeptide) pyrophosphoryl-undecaprenol N-acetylglucosamine transferase (358 aa).

UDP-N-acetyl-alpha-D-glucosamine contacts are provided by residues 11–13 (TGG), N124, R164, S195, and Q291.

Belongs to the glycosyltransferase 28 family. MurG subfamily.

Its subcellular location is the cell inner membrane. The catalysed reaction is di-trans,octa-cis-undecaprenyl diphospho-N-acetyl-alpha-D-muramoyl-L-alanyl-D-glutamyl-meso-2,6-diaminopimeloyl-D-alanyl-D-alanine + UDP-N-acetyl-alpha-D-glucosamine = di-trans,octa-cis-undecaprenyl diphospho-[N-acetyl-alpha-D-glucosaminyl-(1-&gt;4)]-N-acetyl-alpha-D-muramoyl-L-alanyl-D-glutamyl-meso-2,6-diaminopimeloyl-D-alanyl-D-alanine + UDP + H(+). It participates in cell wall biogenesis; peptidoglycan biosynthesis. Its function is as follows. Cell wall formation. Catalyzes the transfer of a GlcNAc subunit on undecaprenyl-pyrophosphoryl-MurNAc-pentapeptide (lipid intermediate I) to form undecaprenyl-pyrophosphoryl-MurNAc-(pentapeptide)GlcNAc (lipid intermediate II). This Leptospira interrogans serogroup Icterohaemorrhagiae serovar copenhageni (strain Fiocruz L1-130) protein is UDP-N-acetylglucosamine--N-acetylmuramyl-(pentapeptide) pyrophosphoryl-undecaprenol N-acetylglucosamine transferase.